Consider the following 475-residue polypeptide: Peroxisome proliferator-activated receptor gamma (475 aa).

Serine 82 is subject to Phosphoserine; by MAPK. The nuclear receptor DNA-binding region spans 106–180 (AIECRVCSDK…VGMSHNAIRF (75 aa)). NR C4-type zinc fingers lie at residues 109 to 129 (CRVCSDKASGFHYGVHACEGC) and 146 to 168 (CDLNCRIHKKSRNKCQYCRFQKC). An interaction with FAM120B region spans residues 175–250 (HNAIRFGRMP…DKSPFVIYDM (76 aa)). Residues 208–473 (DLRALAKHLY…HPLLQEIYKD (266 aa)) enclose the NR LBD domain. Lysine 222 participates in a covalent cross-link: Glycyl lysine isopeptide (Lys-Gly) (interchain with G-Cter in ubiquitin). A 9aaTAD motif is present at residues 465-473 (PLLQEIYKD).

It belongs to the nuclear hormone receptor family. NR1 subfamily. Interacts with FOXO1 (acetylated form). Heterodimer with other nuclear receptors, such as RXRA. The heterodimer with the retinoic acid receptor RXRA is called adipocyte-specific transcription factor ARF6. Interacts with NCOA6 coactivator, leading to a strong increase in transcription of target genes. Interacts with coactivator PPARBP, leading to a mild increase in transcription of target genes. Interacts with NOCA7 in a ligand-inducible manner. Interacts with NCOA1 and NCOA2 LXXLL motifs. Interacts with ASXL1, ASXL2, DNTTIP2, FAM120B, MAP2K1/MEK1, NR0B2, PDPK1, PRDM16, PRMT2 and TGFB1I1. Interacts (when activated by agonist) with PPP5C. Interacts with HELZ2 and THRAP3; the interaction stimulates the transcriptional activity of PPARG. Interacts with PER2, the interaction is ligand dependent and blocks PPARG recruitment to target promoters. Interacts with NOCT. Interacts with ACTN4. Interacts (when in the liganded conformation) with GPS2. Interacts with CRY1 and CRY2 in a ligand-dependent manner. In the absence of hormonal ligand, interacts with TACC1. In macrophages, interacts with PAQR3 and STUB1; the interactions promote PPARG poylubiquitination and STUB1-mediated degradation. Phosphorylated at basal conditions and dephosphorylated when treated with the ligand. May be dephosphorylated by PPP5C. The phosphorylated form may be inactive and dephosphorylation induces adipogenic activity. In terms of processing, ubiquitinated by E3 ubiquitin-protein ligase complex containing FBXO9; leading to proteasomal degradation. Ubiquitinated at Lys-222 by TRIM55 leading to proteasomal degradation. Ubiquitinated by E3 ubiquitin-protein ligase STUB1/CHIP; leading to proteasomal degradation.

The protein resides in the nucleus. It localises to the cytoplasm. With respect to regulation, PDPK1 activates its transcriptional activity independently of its kinase activity. In terms of biological role, nuclear receptor that binds peroxisome proliferators such as hypolipidemic drugs and fatty acids. Once activated by a ligand, the nuclear receptor binds to DNA specific PPAR response elements (PPRE) and modulates the transcription of its target genes, such as acyl-CoA oxidase. It therefore controls the peroxisomal beta-oxidation pathway of fatty acids. Key regulator of adipocyte differentiation and glucose homeostasis. ARF6 acts as a key regulator of the tissue-specific adipocyte P2 (aP2) enhancer. Acts as a critical regulator of gut homeostasis by suppressing NF-kappa-B-mediated pro-inflammatory responses. Plays a role in the regulation of cardiovascular circadian rhythms by regulating the transcription of BMAL1 in the blood vessels. In Oryctolagus cuniculus (Rabbit), this protein is Peroxisome proliferator-activated receptor gamma (PPARG).